An 813-amino-acid chain; its full sequence is Acyl-homoserine lactone acylase QuiP (813 aa).

A signal peptide spans 1–26 (MAAPAFPPFRLRFATAATLLGMLGLA). Serine 262 (nucleophile) is an active-site residue.

It belongs to the peptidase S45 family. Heterodimer of an alpha subunit and a beta subunit processed from the same precursor.

Its subcellular location is the periplasm. The catalysed reaction is an N-acyl-L-homoserine lactone + H2O = L-homoserine lactone + a carboxylate. In terms of biological role, catalyzes the deacylation of acyl-homoserine lactone (AHL or acyl-HSL), releasing homoserine lactone (HSL) and the corresponding fatty acid. Possesses a specificity for the degradation of long-chain acyl-HSLs (side chains of seven or more carbons in length). This chain is Acyl-homoserine lactone acylase QuiP (quiP), found in Pseudomonas putida (strain ATCC 47054 / DSM 6125 / CFBP 8728 / NCIMB 11950 / KT2440).